A 461-amino-acid polypeptide reads, in one-letter code: D-phenylhydantoinase (461 aa).

A divalent metal cation contacts are provided by H59, H61, and K151. K151 is subject to N6-carboxylysine. Y156 contacts substrate. Residues H182 and H239 each coordinate a divalent metal cation. S286 lines the substrate pocket. D313 lines the a divalent metal cation pocket. N335 contacts substrate.

Belongs to the metallo-dependent hydrolases superfamily. Hydantoinase/dihydropyrimidinase family. Homotetramer. A divalent metal cation serves as cofactor. Carboxylation allows a single lysine to coordinate two divalent metal cations.

The catalysed reaction is D-5-phenylhydantoin + H2O = N-carbamoyl-D-phenylglycine + H(+). Catalyzes the stereospecific hydrolysis of the cyclic amide bond of D-hydantoin derivatives with an aromatic side chains at the 5'-position. Has no activity on dihydropyrimidines. The physiological function is unknown. The protein is D-phenylhydantoinase of Escherichia coli O127:H6 (strain E2348/69 / EPEC).